Consider the following 142-residue polypeptide: Small heat shock protein IbpB (142 aa).

The region spanning 26–137 (AGESQSFPPY…APQRIAISER (112 aa)) is the sHSP domain.

It belongs to the small heat shock protein (HSP20) family. As to quaternary structure, homodimer. Forms homomultimers of about 100-150 subunits at optimal growth temperatures. Conformation changes to oligomers at high temperatures or high ionic concentrations. The decrease in size of the multimers is accompanied by an increase in chaperone activity.

The protein localises to the cytoplasm. In terms of biological role, associates with aggregated proteins, together with IbpA, to stabilize and protect them from irreversible denaturation and extensive proteolysis during heat shock and oxidative stress. Aggregated proteins bound to the IbpAB complex are more efficiently refolded and reactivated by the ATP-dependent chaperone systems ClpB and DnaK/DnaJ/GrpE. Its activity is ATP-independent. The protein is Small heat shock protein IbpB of Klebsiella pneumoniae subsp. pneumoniae (strain ATCC 700721 / MGH 78578).